Reading from the N-terminus, the 234-residue chain is Zinc transport system ATP-binding protein AdcC (234 aa).

The 231-residue stretch at 4–234 folds into the ABC transporter domain; the sequence is ITVEDLSFYY…HENGQEVGHA (231 aa). 36–43 provides a ligand contact to ATP; it reads GENGAAKT.

The protein belongs to the ABC transporter superfamily.

Functionally, part of the ATP-driven transport system AdcABC for zinc. Required for transformability. The sequence is that of Zinc transport system ATP-binding protein AdcC (adcC) from Streptococcus pneumoniae (strain ATCC BAA-255 / R6).